Consider the following 289-residue polypeptide: Transmembrane protein 163 (289 aa).

The segment at 1 to 65 (MEPAAGIQRR…ESGQFSDGLE (65 aa)) is disordered. Residues 1-88 (MEPAAGIQRR…HEAQNYRKKA (88 aa)) lie on the Cytoplasmic side of the membrane. Ser-11 carries the phosphoserine modification. Over residues 16–36 (TVPPPPRGHAPPAAAPGPAPL) the composition is skewed to pro residues. Residues 42 to 72 (EPPQLEEERQVRISESGQFSDGLEDRGLLES) form a required for interaction with MCOLN1 region. 3 positions are modified to phosphoserine: Ser-55, Ser-57, and Ser-61. A helical membrane pass occupies residues 89–109 (LWVSWFSIIVTLALAVAAFTV). The Extracellular segment spans residues 110–116 (SVMRYSA). The chain crosses the membrane as a helical span at residues 117 to 137 (SAFGFAFDAILDVLSSAIVLW). At 138-150 (RYSNAAAVHSAHR) the chain is on the cytoplasmic side. Residues 151–171 (EYIACVILGVIFLLSSICIVV) form a helical membrane-spanning segment. Residues 172–187 (KAIHDLSTRLLPEVDD) are Extracellular-facing. The chain crosses the membrane as a helical span at residues 188–208 (FLFSVSILSGILCSILAVLKF). Topologically, residues 209 to 217 (MLGKVLTSR) are cytoplasmic. Residues 218–238 (ALITDGFNSLVGGVMGFSILL) traverse the membrane as a helical segment. Residues 239–255 (SAEVFKHDSAVWYLDGS) are Extracellular-facing. The helical transmembrane segment at 256-276 (IGVLIGLTIFAYGVKLLIDMV) threads the bilayer. At 277–289 (PRVRQTRHYEMFE) the chain is on the cytoplasmic side.

Belongs to the TMEM163 family. As to quaternary structure, homodimer. Interacts with MCOLN1/TRPML1. Interacts with SLC30A1, SLC30A2, SLC30A3 and SLC30A4. In terms of tissue distribution, widely expressed. High expression is detected in brain, lung and testis.

Its subcellular location is the cytoplasmic vesicle. It is found in the secretory vesicle. It localises to the synaptic vesicle membrane. The protein localises to the early endosome membrane. The protein resides in the late endosome membrane. Its subcellular location is the lysosome membrane. It is found in the cell membrane. It carries out the reaction Zn(2+)(in) = Zn(2+)(out). Functionally, zinc ion transporter that mediates zinc efflux and plays a crucial role in intracellular zinc homeostasis. Binds the divalent cations Zn(2+), Ni(2+), and to a minor extent Cu(2+). Is a functional modulator of P2X purinoceptors, including P2RX1, P2RX3, P2RX4 and P2RX7. Plays a role in central nervous system development and is required for myelination, and survival and proliferation of oligodendrocytes. This Homo sapiens (Human) protein is Transmembrane protein 163 (TMEM163).